The sequence spans 238 residues: CD63 antigen (238 aa).

Over 2 to 11 (AVEGGMKCVK) the chain is Cytoplasmic. Residues 12-32 (FLLYVLLLAFCACAVGLIAIG) traverse the membrane as a helical segment. Over 33–51 (VAVQVVLKQAITHETTAGS) the chain is Extracellular. The chain crosses the membrane as a helical span at residues 52–72 (LLPVVIIAVGAFLFLVAFVGC). Residues 73-81 (CGACKENYC) are Cytoplasmic-facing. The chain crosses the membrane as a helical span at residues 82-102 (LMITFAIFLSLIMLVEVAVAI). The Extracellular portion of the chain corresponds to 103–203 (AGYVFRDQVK…TIAAWLRKNV (101 aa)). Residues Asn-130, Asn-150, and Asn-172 are each glycosylated (N-linked (GlcNAc...) asparagine). Residues 204-224 (LLVAGAALGIAFVEVLGIIFS) traverse the membrane as a helical segment. Over 225–238 (CCLVKSIRSGYEVM) the chain is Cytoplasmic. The short motif at 234 to 238 (GYEVM) is the Lysosomal targeting motif element.

Belongs to the tetraspanin (TM4SF) family. Interacts with TIMP1 and ITGB1 and recruits TIMP1 to ITGB1. Interacts with CD9. Identified in a complex with CD9 and ITGB3. Interacts with PMEL. Interacts with KDR/VEGFR2; identified in a complex with ITGB1 and KDR/VEGFR2 and is required to recruit KDR to ITGB1 complexes. Interacts with SYT7. In terms of processing, palmitoylated at a low, basal level in unstimulated platelets. The level of palmitoylation increases when platelets are activated by thrombin (in vitro). Detected in mast cells and platelets (at protein level).

The protein resides in the cell membrane. It localises to the lysosome membrane. Its subcellular location is the late endosome membrane. The protein localises to the endosome. It is found in the multivesicular body. The protein resides in the melanosome. It localises to the secreted. Its subcellular location is the extracellular exosome. The protein localises to the cell surface. Functions as a cell surface receptor for TIMP1 and plays a role in the activation of cellular signaling cascades. Plays a role in the activation of ITGB1 and integrin signaling, leading to the activation of AKT, FAK/PTK2 and MAP kinases. Promotes cell survival, reorganization of the actin cytoskeleton, cell adhesion, spreading and migration, via its role in the activation of AKT and FAK/PTK2. Plays a role in VEGFA signaling via its role in regulating the internalization of KDR/VEGFR2. Plays a role in intracellular vesicular transport processes, and is required for normal trafficking of the PMEL luminal domain that is essential for the development and maturation of melanocytes. Plays a role in the adhesion of leukocytes onto endothelial cells via its role in the regulation of SELP trafficking. May play a role in mast cell degranulation in response to Ms4a2/FceRI stimulation, but not in mast cell degranulation in response to other stimuli. This chain is CD63 antigen (Cd63), found in Rattus norvegicus (Rat).